The sequence spans 338 residues: MLSERRLEVLRAIVQDYVGTEEPVGSKALTERHRLGVSPATVRNDMAALEDEGYIAQPHTSAGPIPTDKGYRLFVDRLADVKPMTAPERRAIHHFLDQAVDLDDVVARTVRLLAHVTRQVAVVQYPSLTRSTVRHVELLSMAPARLMLVLITDTGRVEQRMIDCPAPFGESSVADLRARLNSQVAGRRFADVPQLVQDLPESFESEDRPTVSTVLSTLLETLVEETEERLMIGGTANLTRFGHDFPLTIRPVLEALEEQVVLLKLLGEAKDSAMTVRIGHENAHEGLSSTSVVSVGYGSGREAVAKLGVVGPTRMDYPGTMGAVRAVARYVGQILAES.

This sequence belongs to the HrcA family.

Its function is as follows. Negative regulator of class I heat shock genes (grpE-dnaK-dnaJ and groELS operons). Prevents heat-shock induction of these operons. This chain is Heat-inducible transcription repressor HrcA, found in Streptomyces albus G.